A 463-amino-acid chain; its full sequence is ATP-dependent protease ATPase subunit HslU (463 aa).

ATP contacts are provided by residues Ile19, 61–66 (GVGKTE), Asp277, Glu341, and Arg413.

It belongs to the ClpX chaperone family. HslU subfamily. A double ring-shaped homohexamer of HslV is capped on each side by a ring-shaped HslU homohexamer. The assembly of the HslU/HslV complex is dependent on binding of ATP.

It localises to the cytoplasm. ATPase subunit of a proteasome-like degradation complex; this subunit has chaperone activity. The binding of ATP and its subsequent hydrolysis by HslU are essential for unfolding of protein substrates subsequently hydrolyzed by HslV. HslU recognizes the N-terminal part of its protein substrates and unfolds these before they are guided to HslV for hydrolysis. This chain is ATP-dependent protease ATPase subunit HslU, found in Bacillus cereus (strain 03BB102).